Consider the following 499-residue polypeptide: Protein NODULATION SIGNALING PATHWAY 2 (499 aa).

The segment at 64-106 (NNTGPAFSDHTASTTSEEEEEEEATTTTMTTTTTTTTTTPEAA) is disordered. A compositionally biased stretch (low complexity) spans 88-104 (TTTTMTTTTTTTTTTPE). The region spanning 106–491 (ADDDFKGLRL…RRLLSASLWT (386 aa)) is the GRAS domain. A leucine repeat I (LRI) region spans residues 113–182 (LRLVHLLMAG…AGGAYNSSSK (70 aa)). A VHIID region spans residues 201 to 265 (FQLLQDMSPY…PNGPHLRITA (65 aa)). Residues 232-236 (VHIVD) carry the VHIID motif. The interval 281–313 (ETGRRLTAFATSLGQPFSFHHSRLESDETFRPA) is leucine repeat II (LRII). Residues 323–414 (LVFNCMLNLP…RVFLGPRIVG (92 aa)) form a PFYRE region. The segment at 417–491 (ARIYRTGGGG…RRLLSASLWT (75 aa)) is SAW.

This sequence belongs to the GRAS family. In terms of assembly, interacts with IPN2. Binds to RAD1. Interacts with RAM1. Highly expressed in roots.

The protein localises to the nucleus membrane. It localises to the endoplasmic reticulum. In terms of biological role, transcriptional regulator essential for Nod-factor-induced gene expression. Acts downstream of calcium spiking and a calcium/calmodulin-dependent protein kinase required for activation of early nodulation gene expression. Transcription factor involved in the induction of NIN and ENOD40 genes, which are required for rhizobial infection and early nodule development. Does not seem to contribute to the early steps of the arbuscular mycorrhizal fungus infection and colonization processes in roots. Transcription factor involved in the positive regulation of the beta-carotene isomerase D27, which participates in a pathway leading to biosynthesis of strigolactones in roots. The sequence is that of Protein NODULATION SIGNALING PATHWAY 2 from Lotus japonicus (Lotus corniculatus var. japonicus).